The primary structure comprises 34 residues: Photosystem II reaction center protein M (34 aa).

The chain crosses the membrane as a helical span at residues 5–25 (ILAVIATALFVLIPTAFLLIL).

The protein belongs to the PsbM family. PSII is composed of 1 copy each of membrane proteins PsbA, PsbB, PsbC, PsbD, PsbE, PsbF, PsbH, PsbI, PsbJ, PsbK, PsbL, PsbM, PsbT, PsbX, PsbY, PsbZ, Psb30/Ycf12, at least 3 peripheral proteins of the oxygen-evolving complex and a large number of cofactors. It forms dimeric complexes.

It localises to the plastid. Its subcellular location is the chloroplast thylakoid membrane. In terms of biological role, one of the components of the core complex of photosystem II (PSII). PSII is a light-driven water:plastoquinone oxidoreductase that uses light energy to abstract electrons from H(2)O, generating O(2) and a proton gradient subsequently used for ATP formation. It consists of a core antenna complex that captures photons, and an electron transfer chain that converts photonic excitation into a charge separation. This subunit is found at the monomer-monomer interface. This Chaetosphaeridium globosum (Charophycean green alga) protein is Photosystem II reaction center protein M.